A 489-amino-acid polypeptide reads, in one-letter code: Putative ABC transporter ATP-binding protein TDE_0282 (489 aa).

ABC transporter domains lie at 2–241 (ITLR…SMKL) and 269–487 (FAVK…MQLE). Residues 36 to 43 (GASGCGKT) and 301 to 308 (GENGAGKT) each bind ATP.

Belongs to the ABC transporter superfamily.

The protein localises to the cell inner membrane. In terms of biological role, probably part of an ABC transporter complex. Responsible for energy coupling to the transport system. The chain is Putative ABC transporter ATP-binding protein TDE_0282 from Treponema denticola (strain ATCC 35405 / DSM 14222 / CIP 103919 / JCM 8153 / KCTC 15104).